The primary structure comprises 262 residues: Nurim (262 aa).

Residues 1–4 (MAPA) lie on the Nuclear side of the membrane. A helical membrane pass occupies residues 5-28 (LLLVPAALASFVLAFGTGVEFVRF). Over 29–58 (TSLRPLLGGIPESGGPDARHGWLAALQDRS) the chain is Perinuclear space. Residues 59–80 (ILASLAWDLCLLLLFVVQHSLM) form a helical membrane-spanning segment. The Nuclear portion of the chain corresponds to 81–97 (ATEAVKAWTSRYFGVLQ). Residues 98–114 (RSLYVACTALALQLVMR) traverse the membrane as a helical segment. Residues 115 to 133 (YWEATPRGPVLWEARAEPW) lie on the Perinuclear space side of the membrane. Residues 134–164 (ATWVPLLCFVLHVVSWLLIFSILLVFDYAEL) form a helical membrane-spanning segment. Residues 165–191 (MGLKQVYYHVLGLGEPLSLKSPRALRL) are Nuclear-facing. A helical transmembrane segment spans residues 192-210 (FSHLRHPVCVELLTVLWVV). Residues 211–216 (PTLGTD) are Perinuclear space-facing. The chain crosses the membrane as a helical span at residues 217 to 234 (RLLLALLFTLYLGLAHGL). Topologically, residues 235-262 (DQQDLRYLRSQLQRKLQLLSRPQDGEAE) are nuclear.

This sequence belongs to the nurim family.

Its subcellular location is the nucleus inner membrane. The sequence is that of Nurim (Nrm) from Rattus norvegicus (Rat).